The sequence spans 885 residues: MGPRYGGAPALLLPLLLLLQVSSGLCQEPEPCRPGFGADSYTFTVPRRHLERGRVLGRVSFEGCTGLPRTAYVSDDTRFKVGTDGVITVKRPLQLHKPEISFLVHAWDSSRRKLSTRVRLKAATHHHHHHHDAPSKTQTEVLTFPSSQHGLRRQKRDWVIPPISCPENEKGPFPKNLVQIKSNRDKEIKVFYSITGQGADAPPVGVFIIERETGWLKVTEPLDREQIAKYILYSHAVSSNGNAVEDPMEIVITVTDQNDNKPEFTQAVFQGSVTEGALPGTSVMQVTATDADDDVNTYNAAIAYSILTQDPLLPSSMMFTINKDTGVISVLTTGLDREGVPMYTLVVQAADLQGEGLTTTATAVITVTDINDNPPIFNPTTYQGRVPENKANVEIAVLKVTDADVPDTPAWRAVYTILNNNNDQFVVTTDPVTNDGILKTTKGLDFEDKQQYVLYVTVVNVTPFEVILSTSTATVTVDVEDVNEAPIFIPCPKVVSIPEDFGVGQEITSYTAEDPDTYMEQRITYRIWRDAAGWLEVNPESGAIFTRAELDREDFEHVKNSTYEALIIAIDNGSPVATGTGTLLLVLSDVNDNGPIPEPRNMDFCQKNPQPHVINIIDPDLPPNTSPFTAELTHGASVNWTIEYNDPARESLILKPKKTLELGDYKINLKLTDNQNKDQVTTLDVFVCDCEGVVNSCKRTAPYAEAGLQVPAILGILGGILALLILILLLLLFVRRRRVVKEPLLPPEDDTRDNVYYYDEEGGGEEDQDFDLSQLHRGLDARPEVTRNDVAPTLLSVPQYRPRPANPDEIGNFIDENLKAADTDPTAPPYDSLLVFDYEGSGSEAASLSSLNSSESDQDQDYDYLNEWGNRFKKLADMYGGGEDD.

The first 26 residues, M1–C26, serve as a signal peptide directing secretion. The propeptide occupies Q27–R156. A compositionally biased stretch (basic residues) spans K121–H131. Residues K121–V141 are disordered. The Extracellular segment spans residues D157 to A712. 5 Cadherin domains span residues W158 to F264, T265 to F377, N378 to F488, I489 to P597, and K607 to C688. Residue D259 coordinates Ca(2+). A glycan (O-linked (Man...) serine) is linked at S282. O-linked (Man...) threonine glycosylation is present at T287. Residue D290 coordinates Ca(2+). T360, T472, T474, and T511 each carry an O-linked (Man...) threonine glycan. Residue N560 is glycosylated (N-linked (GlcNAc...) asparagine). O-linked (Man...) threonine glycosylation is found at T578, T580, and T582. N639 carries an N-linked (GlcNAc...) asparagine glycan. Residues I713–F733 traverse the membrane as a helical segment. Over V734–D885 the chain is Cytoplasmic. The disordered stretch occupies residues D750–F770. Phosphotyrosine; by SRC is present on residues Y756, Y757, and Y758. Residues Y758 to F770 are compositionally biased toward acidic residues. Positions E761 to L772 are required for binding CTNND1 and PSEN1. Phosphoserine occurs at positions 773, 796, 841, 843, and 849. The tract at residues P792–G811 is disordered. Residues I814–D885 are required for binding alpha, beta and gamma catenins.

In terms of assembly, homodimer; disulfide-linked. Component of an E-cadherin/ catenin adhesion complex composed of at least E-cadherin/CDH1, beta-catenin/CTNNB1 or gamma-catenin/JUP, and potentially alpha-catenin/CTNNA1; the complex is located to adherens junctions. Found in a complex composed of CDH1, RAP1A and PKP3; PKP3 acts as a scaffold protein within the complex, the complex is required for CDH1 localization to mature desmosome cell junctions. Interacts with the TRPV4 and CTNNB1 complex. Interacts with CTNND1. The stable association of CTNNA1 is controversial as CTNNA1 was shown not to bind to F-actin when assembled in the complex. Alternatively, the CTNNA1-containing complex may be linked to F-actin by other proteins such as LIMA1. Interaction with PSEN1, cleaves CDH1 resulting in the disassociation of cadherin-based adherens junctions (CAJs). Interacts with AJAP1 and DLGAP5. Interacts with TBC1D2. Interacts with LIMA1. Interacts with CAV1. Interacts with PIP5K1C. Interacts with RAB8B. Interacts with DDR1; this stabilizes CDH1 at the cell surface and inhibits its internalization. Interacts with RAPGEF2. Interacts with KLRG1. Forms a ternary complex composed of ADAM10, CADH1 and EPHA4; within the complex, CADH1 is cleaved by ADAM10 which disrupts adherens junctions. Interacts with SPEF1. Interacts with CTNNB1 and PKP2. Interacts with AMOTL2; the interaction may facilitate binding of radial actin fibers to cell junction complexes. Interacts with DSG3; the interaction is required for CDH1 localization to developing adherens junctions. During apoptosis or with calcium influx, cleaved by a membrane-bound metalloproteinase (ADAM10), PS1/gamma-secretase and caspase-3. Processing by the metalloproteinase, induced by calcium influx, causes disruption of cell-cell adhesion and the subsequent release of beta-catenin into the cytoplasm. The residual membrane-tethered cleavage product is rapidly degraded via an intracellular proteolytic pathway. Cleavage by caspase-3 releases the cytoplasmic tail resulting in disintegration of the actin microfilament system. The gamma-secretase-mediated cleavage promotes disassembly of adherens junctions. During development of the cochlear organ of Corti, cleavage by ADAM10 at adherens junctions promotes pillar cell separation. Post-translationally, N-glycosylation at Asn-639 is essential for expression, folding and trafficking. Addition of bisecting N-acetylglucosamine by MGAT3 modulates its cell membrane location. In terms of processing, ubiquitinated by a SCF complex containing SKP2, which requires prior phosphorylation by CK1/CSNK1A1. Ubiquitinated by CBLL1/HAKAI, requires prior phosphorylation at Tyr-757. O-glycosylated. O-manosylated by TMTC1, TMTC2, TMTC3 or TMTC4. Thr-287 and Thr-511 are O-mannosylated by TMTC2 or TMTC4 but not TMTC1 or TMTC3.

The protein localises to the cell junction. It localises to the adherens junction. Its subcellular location is the cell membrane. It is found in the endosome. The protein resides in the golgi apparatus. The protein localises to the trans-Golgi network. It localises to the cytoplasm. Its subcellular location is the desmosome. Its function is as follows. Cadherins are calcium-dependent cell adhesion proteins. They preferentially interact with themselves in a homophilic manner in connecting cells; cadherins may thus contribute to the sorting of heterogeneous cell types. CDH1 is involved in mechanisms regulating cell-cell adhesions, mobility and proliferation of epithelial cells. Promotes organization of radial actin fiber structure and cellular response to contractile forces, via its interaction with AMOTL2 which facilitates anchoring of radial actin fibers to CDH1 junction complexes at the cell membrane. Plays a role in the early stages of desmosome cell-cell junction formation via facilitating the recruitment of DSG2 and DSP to desmosome plaques. Has a potent invasive suppressor role. It is a ligand for integrin alpha-E/beta-7. In terms of biological role, E-Cad/CTF2 promotes non-amyloidogenic degradation of Abeta precursors. Has a strong inhibitory effect on APP C99 and C83 production. The sequence is that of Cadherin-1 (CDH1) from Canis lupus familiaris (Dog).